A 186-amino-acid polypeptide reads, in one-letter code: ATP synthase subunit delta (186 aa).

Belongs to the ATPase delta chain family. In terms of assembly, F-type ATPases have 2 components, F(1) - the catalytic core - and F(0) - the membrane proton channel. F(1) has five subunits: alpha(3), beta(3), gamma(1), delta(1), epsilon(1). CF(0) has four main subunits: a(1), b(1), b'(1) and c(10-14). The alpha and beta chains form an alternating ring which encloses part of the gamma chain. F(1) is attached to F(0) by a central stalk formed by the gamma and epsilon chains, while a peripheral stalk is formed by the delta, b and b' chains.

It localises to the cell inner membrane. Its function is as follows. F(1)F(0) ATP synthase produces ATP from ADP in the presence of a proton or sodium gradient. F-type ATPases consist of two structural domains, F(1) containing the extramembraneous catalytic core and F(0) containing the membrane proton channel, linked together by a central stalk and a peripheral stalk. During catalysis, ATP synthesis in the catalytic domain of F(1) is coupled via a rotary mechanism of the central stalk subunits to proton translocation. This protein is part of the stalk that links CF(0) to CF(1). It either transmits conformational changes from CF(0) to CF(1) or is implicated in proton conduction. The polypeptide is ATP synthase subunit delta (Cereibacter sphaeroides (strain ATCC 17029 / ATH 2.4.9) (Rhodobacter sphaeroides)).